We begin with the raw amino-acid sequence, 208 residues long: Probable GTP-binding protein EngB (208 aa).

In terms of domain architecture, EngB-type G spans 29–203; sequence EGREVAFAGR…WDKLGEWLGI (175 aa). GTP contacts are provided by residues 37 to 44, 64 to 68, 82 to 85, 149 to 152, and 182 to 184; these read GRSNAGKS, GRTQL, DLPG, TKAD, and FSA. Residues S44 and T66 each coordinate Mg(2+).

The protein belongs to the TRAFAC class TrmE-Era-EngA-EngB-Septin-like GTPase superfamily. EngB GTPase family. Mg(2+) serves as cofactor.

Necessary for normal cell division and for the maintenance of normal septation. The sequence is that of Probable GTP-binding protein EngB from Alcanivorax borkumensis (strain ATCC 700651 / DSM 11573 / NCIMB 13689 / SK2).